A 91-amino-acid chain; its full sequence is Small ribosomal subunit protein bS18 (91 aa).

Belongs to the bacterial ribosomal protein bS18 family. In terms of assembly, part of the 30S ribosomal subunit. Forms a tight heterodimer with protein bS6.

Binds as a heterodimer with protein bS6 to the central domain of the 16S rRNA, where it helps stabilize the platform of the 30S subunit. The protein is Small ribosomal subunit protein bS18 of Wolbachia sp. subsp. Brugia malayi (strain TRS).